Consider the following 333-residue polypeptide: Phenylalanine--tRNA ligase alpha subunit (333 aa).

Glu248 provides a ligand contact to Mg(2+).

This sequence belongs to the class-II aminoacyl-tRNA synthetase family. Phe-tRNA synthetase alpha subunit type 1 subfamily. Tetramer of two alpha and two beta subunits. Mg(2+) serves as cofactor.

Its subcellular location is the cytoplasm. It carries out the reaction tRNA(Phe) + L-phenylalanine + ATP = L-phenylalanyl-tRNA(Phe) + AMP + diphosphate + H(+). This is Phenylalanine--tRNA ligase alpha subunit from Ureaplasma parvum serovar 3 (strain ATCC 27815 / 27 / NCTC 11736).